We begin with the raw amino-acid sequence, 270 residues long: Fluoride-specific ion channel FluC 2 (270 aa).

Helical transmembrane passes span 4–24 (IIIL…FIML), 35–55 (LDIL…TALY), 67–87 (IIGT…YGSV), and 96–116 (AFLI…VAVL). Residues Gly-74 and Ser-77 each coordinate Na(+).

It belongs to the fluoride channel Fluc/FEX (TC 1.A.43) family.

Its subcellular location is the cell inner membrane. The enzyme catalyses fluoride(in) = fluoride(out). Na(+) is not transported, but it plays an essential structural role and its presence is essential for fluoride channel function. In terms of biological role, fluoride-specific ion channel. Important for reducing fluoride concentration in the cell, thus reducing its toxicity. This is Fluoride-specific ion channel FluC 2 from Brucella melitensis biotype 1 (strain ATCC 23456 / CCUG 17765 / NCTC 10094 / 16M).